The primary structure comprises 137 residues: Nucleoside diphosphate kinase (137 aa).

ATP contacts are provided by Lys9, Phe57, Arg85, Thr91, Arg102, and Asn112. His115 acts as the Pros-phosphohistidine intermediate in catalysis.

This sequence belongs to the NDK family. Homotetramer. It depends on Mg(2+) as a cofactor.

The protein localises to the cytoplasm. The catalysed reaction is a 2'-deoxyribonucleoside 5'-diphosphate + ATP = a 2'-deoxyribonucleoside 5'-triphosphate + ADP. It carries out the reaction a ribonucleoside 5'-diphosphate + ATP = a ribonucleoside 5'-triphosphate + ADP. Major role in the synthesis of nucleoside triphosphates other than ATP. The ATP gamma phosphate is transferred to the NDP beta phosphate via a ping-pong mechanism, using a phosphorylated active-site intermediate. The chain is Nucleoside diphosphate kinase from Geobacter sulfurreducens (strain ATCC 51573 / DSM 12127 / PCA).